A 210-amino-acid polypeptide reads, in one-letter code: Glutathione S-transferase P (210 aa).

The GST N-terminal domain occupies 2-81 (PPYTVVYFPV…HLGRTLGLYG (80 aa)). Position 4 is a phosphotyrosine; by EGFR (Tyr-4). Residues Tyr-8, Arg-14, Trp-39, Lys-45, and 52–53 (QL) each bind glutathione. At Thr-62 the chain carries Phosphothreonine. Position 65–66 (65–66 (QS)) interacts with glutathione. A GST C-terminal domain is found at 83-204 (DQQEAALVDM…ASPEYVNLPI (122 aa)). N6-succinyllysine is present on residues Lys-103 and Lys-116. Lys-128 is subject to N6-acetyllysine. Residue Tyr-199 is modified to Phosphotyrosine; by EGFR.

Belongs to the GST superfamily. Pi family. As to quaternary structure, homodimer. Interacts with CDK5.

The protein resides in the cytoplasm. It is found in the mitochondrion. Its subcellular location is the nucleus. It catalyses the reaction RX + glutathione = an S-substituted glutathione + a halide anion + H(+). The catalysed reaction is prostaglandin J2 + glutathione = prostaglandin J2-S-(R)-glutathione. The enzyme catalyses prostaglandin J2 + glutathione = prostaglandin J2-S-(S)-glutathione. It carries out the reaction prostaglandin A2 + glutathione = prostaglandin A2-S-(S)-glutathione. It catalyses the reaction 11(S)-hydroxy-14(S),15(S)-epoxy-(5Z,8Z,12E)-eicosatrienoate + glutathione = (11S,15S)-dihydroxy-14(R)-S-glutathionyl-(5Z,8Z,12E)-eicosatrienoate. In terms of biological role, conjugation of reduced glutathione to a wide number of exogenous and endogenous hydrophobic electrophiles. Involved in the formation of glutathione conjugates of both prostaglandin A2 (PGA2) and prostaglandin J2 (PGJ2). Participates in the formation of novel hepoxilin regioisomers. Negatively regulates CDK5 activity via p25/p35 translocation to prevent neurodegeneration. The sequence is that of Glutathione S-transferase P from Homo sapiens (Human).